The chain runs to 410 residues: MAREKFERTKPHVNIGTIGHVDHGKTTLTAAITMVMACNTAGSKGKKYEDIDSAPEEKARGITINTAHVEYETATRHYAHVDCPGHADYVKNMITGAAQMDGAILVVSGADGPMPQTKEHILLAKQVGVPNIVVFLNKQDQVDDEELLELVELEVRETLSNYEFPGDEVPVVPGSALLALEAMTENPSLKRGENEWVDKIFALMDAVDQYIPTPKRDTDKSFLMAVEDVFSITGRGTVATGRVERGSVKLGDTIEIVGLKPTRETTVTGLEMFQKTLDQSVAGDNVGILLRGIQKEDIQRGMVLAAPRTITPHTKFESQVYVLTKEEGGRHTPFFPGYRPQFYVRTTDVTGKIDSFRADDGGEATMVMPGDRVKMVVELIQPIAIEKGMRFAIREGGRTVGAGVVSNIIA.

A tr-type G domain is found at 10-215 (KPHVNIGTIG…AVDQYIPTPK (206 aa)). Positions 19–26 (GHVDHGKT) are G1. Position 19 to 26 (19 to 26 (GHVDHGKT)) interacts with GTP. Thr-26 provides a ligand contact to Mg(2+). The interval 61 to 65 (GITIN) is G2. A G3 region spans residues 82 to 85 (DCPG). Residues 82 to 86 (DCPGH) and 137 to 140 (NKQD) each bind GTP. The G4 stretch occupies residues 137-140 (NKQD). The segment at 175 to 177 (SAL) is G5.

This sequence belongs to the TRAFAC class translation factor GTPase superfamily. Classic translation factor GTPase family. EF-Tu/EF-1A subfamily.

The protein resides in the plastid. The protein localises to the chloroplast. It catalyses the reaction GTP + H2O = GDP + phosphate + H(+). Its function is as follows. GTP hydrolase that promotes the GTP-dependent binding of aminoacyl-tRNA to the A-site of ribosomes during protein biosynthesis. This chain is Elongation factor Tu, chloroplastic (tufA), found in Nephroselmis olivacea (Green alga).